Reading from the N-terminus, the 139-residue chain is Histone H3.3 type a (139 aa).

A disordered region spans residues 1–43 (MARTKQTARKSTGAKVPRKHIGSKQAHKQTPVSSSSGGVKKVH). K5 carries the post-translational modification N6,N6,N6-trimethyllysine; by set1; alternate. Residue K5 is modified to N6,N6-dimethyllysine; by set1; alternate. Residues K5 and K10 each carry the N6-acetyllysine; alternate modification. Position 5 is an N6-methyllysine; by set1; alternate (K5). At K10 the chain carries N6,N6,N6-trimethyllysine; alternate. The residue at position 10 (K10) is an N6,N6-dimethyllysine; alternate. K10 is subject to N6-methyllysine; alternate. Position 11 is a phosphoserine (S11). K15 carries the post-translational modification N6-acetyllysine. Residues 16–27 (VPRKHIGSKQAH) are compositionally biased toward basic residues. 4 positions are modified to N6-acetyllysine; alternate: K19, K24, K28, and K40. N6-methyllysine; alternate occurs at positions 19, 24, 28, and 40. An N6,N6,N6-trimethyllysine; alternate mark is found at K28 and K40. N6,N6-dimethyllysine; alternate is present on residues K28 and K40. K60 is subject to N6-acetyllysine. K83 carries the post-translational modification N6,N6,N6-trimethyllysine; alternate. K83 is subject to N6,N6-dimethyllysine; alternate. K83 carries the post-translational modification N6-methyllysine; alternate.

This sequence belongs to the histone H3 family. The nucleosome is a histone octamer containing two molecules each of H2A, H2B, H3 and H4 assembled in one H3-H4 heterotetramer and two H2A-H2B heterodimers. The octamer wraps approximately 147 bp of DNA. In terms of processing, acetylation is generally linked to gene activation. Different methylation states of H3K4 mark distinct developmental phases. H3K4me2 is associated with euchromatic regions. H3K4me3 is a mark of active chromatin. set1 is responsible for all mono-, di- and tri-methylation of H3K4. H3K4me facilitates subsequent acetylation of H3 and H4. Methylation at H3K9 and H3K27 are linked to gene repression. Post-translationally, H3S10ph, which is linked to gene activation, prevents methylation at H3K9 but facilitates acetylation of H3 and H4.

It is found in the nucleus. The protein localises to the chromosome. Core component of nucleosome. Nucleosomes wrap and compact DNA into chromatin, limiting DNA accessibility to the cellular machineries which require DNA as a template. Histones thereby play a central role in transcription regulation, DNA repair, DNA replication and chromosomal stability. DNA accessibility is regulated via a complex set of post-translational modifications of histones, also called histone code, and nucleosome remodeling. The protein is Histone H3.3 type a (H3a) of Dictyostelium discoideum (Social amoeba).